The sequence spans 302 residues: 4-hydroxy-tetrahydrodipicolinate synthase (302 aa).

Residue Thr55 participates in pyruvate binding. Tyr144 (proton donor/acceptor) is an active-site residue. Lys172 functions as the Schiff-base intermediate with substrate in the catalytic mechanism. Val214 is a binding site for pyruvate.

The protein belongs to the DapA family. In terms of assembly, homotetramer; dimer of dimers.

Its subcellular location is the cytoplasm. The catalysed reaction is L-aspartate 4-semialdehyde + pyruvate = (2S,4S)-4-hydroxy-2,3,4,5-tetrahydrodipicolinate + H2O + H(+). It functions in the pathway amino-acid biosynthesis; L-lysine biosynthesis via DAP pathway; (S)-tetrahydrodipicolinate from L-aspartate: step 3/4. Catalyzes the condensation of (S)-aspartate-beta-semialdehyde [(S)-ASA] and pyruvate to 4-hydroxy-tetrahydrodipicolinate (HTPA). This is 4-hydroxy-tetrahydrodipicolinate synthase from Parasynechococcus marenigrum (strain WH8102).